Here is a 125-residue protein sequence, read N- to C-terminus: Ribosome-binding factor A (125 aa).

Belongs to the RbfA family. As to quaternary structure, monomer. Binds 30S ribosomal subunits, but not 50S ribosomal subunits or 70S ribosomes.

The protein resides in the cytoplasm. Functionally, one of several proteins that assist in the late maturation steps of the functional core of the 30S ribosomal subunit. Associates with free 30S ribosomal subunits (but not with 30S subunits that are part of 70S ribosomes or polysomes). Required for efficient processing of 16S rRNA. May interact with the 5'-terminal helix region of 16S rRNA. The protein is Ribosome-binding factor A of Thermosipho melanesiensis (strain DSM 12029 / CIP 104789 / BI429).